The chain runs to 208 residues: Probable nicotinate-nucleotide adenylyltransferase (208 aa).

This sequence belongs to the NadD family.

The enzyme catalyses nicotinate beta-D-ribonucleotide + ATP + H(+) = deamido-NAD(+) + diphosphate. Its pathway is cofactor biosynthesis; NAD(+) biosynthesis; deamido-NAD(+) from nicotinate D-ribonucleotide: step 1/1. Functionally, catalyzes the reversible adenylation of nicotinate mononucleotide (NaMN) to nicotinic acid adenine dinucleotide (NaAD). The polypeptide is Probable nicotinate-nucleotide adenylyltransferase (Nostoc sp. (strain PCC 7120 / SAG 25.82 / UTEX 2576)).